A 146-amino-acid chain; its full sequence is Holo-[acyl-carrier-protein] synthase (146 aa).

Mg(2+) contacts are provided by D8 and E61.

The protein belongs to the P-Pant transferase superfamily. AcpS family. The cofactor is Mg(2+).

The protein localises to the cytoplasm. It catalyses the reaction apo-[ACP] + CoA = holo-[ACP] + adenosine 3',5'-bisphosphate + H(+). Transfers the 4'-phosphopantetheine moiety from coenzyme A to a Ser of acyl-carrier-protein. In Rhodopseudomonas palustris (strain ATCC BAA-98 / CGA009), this protein is Holo-[acyl-carrier-protein] synthase.